The primary structure comprises 87 residues: U3-theraphotoxin-Hhn1a 7 (87 aa).

The first 24 residues, 1-24 (MVNMKASMFLTFAGLVLLFVVSYA), serve as a signal peptide directing secretion. The propeptide occupies 25 to 52 (SESEEKEFPKEMLSSIFAVDNDFKQEER). 3 cysteine pairs are disulfide-bonded: Cys-54–Cys-67, Cys-61–Cys-72, and Cys-66–Cys-79.

This sequence belongs to the neurotoxin 10 (Hwtx-1) family. 51 (Hntx-8) subfamily. Hntx-8 sub-subfamily. Expressed by the venom gland.

The protein localises to the secreted. Ion channel inhibitor. This is U3-theraphotoxin-Hhn1a 7 from Cyriopagopus hainanus (Chinese bird spider).